Reading from the N-terminus, the 140-residue chain is Nucleoside diphosphate kinase (140 aa).

ATP-binding residues include Lys11, Phe59, Arg87, Thr93, Arg104, and Asn114. His117 serves as the catalytic Pros-phosphohistidine intermediate.

Belongs to the NDK family. Homotetramer. Requires Mg(2+) as cofactor.

The protein localises to the cytoplasm. The catalysed reaction is a 2'-deoxyribonucleoside 5'-diphosphate + ATP = a 2'-deoxyribonucleoside 5'-triphosphate + ADP. It carries out the reaction a ribonucleoside 5'-diphosphate + ATP = a ribonucleoside 5'-triphosphate + ADP. Its function is as follows. Major role in the synthesis of nucleoside triphosphates other than ATP. The ATP gamma phosphate is transferred to the NDP beta phosphate via a ping-pong mechanism, using a phosphorylated active-site intermediate. This chain is Nucleoside diphosphate kinase, found in Rhodopseudomonas palustris (strain HaA2).